We begin with the raw amino-acid sequence, 492 residues long: Glycogen synthase 1 (492 aa).

K15 contacts ADP-alpha-D-glucose.

This sequence belongs to the glycosyltransferase 1 family. Bacterial/plant glycogen synthase subfamily.

It catalyses the reaction [(1-&gt;4)-alpha-D-glucosyl](n) + ADP-alpha-D-glucose = [(1-&gt;4)-alpha-D-glucosyl](n+1) + ADP + H(+). It participates in glycan biosynthesis; glycogen biosynthesis. Synthesizes alpha-1,4-glucan chains using ADP-glucose. The polypeptide is Glycogen synthase 1 (Trichormus variabilis (strain ATCC 29413 / PCC 7937) (Anabaena variabilis)).